The following is a 108-amino-acid chain: Tetrahydromethanopterin S-methyltransferase subunit B (108 aa).

Residues 81–101 (FFGFWISLSILTLGLILVIGL) form a helical membrane-spanning segment.

This sequence belongs to the MtrB family. The complex is composed of 8 subunits; MtrA, MtrB, MtrC, MtrD, MtrE, MtrF, MtrG and MtrH.

Its subcellular location is the cell membrane. It carries out the reaction 5-methyl-5,6,7,8-tetrahydromethanopterin + coenzyme M + 2 Na(+)(in) = 5,6,7,8-tetrahydromethanopterin + methyl-coenzyme M + 2 Na(+)(out). It functions in the pathway one-carbon metabolism; methanogenesis from CO(2); methyl-coenzyme M from 5,10-methylene-5,6,7,8-tetrahydromethanopterin: step 2/2. Part of a complex that catalyzes the formation of methyl-coenzyme M and tetrahydromethanopterin from coenzyme M and methyl-tetrahydromethanopterin. This is an energy-conserving, sodium-ion translocating step. This is Tetrahydromethanopterin S-methyltransferase subunit B from Methanococcus aeolicus (strain ATCC BAA-1280 / DSM 17508 / OCM 812 / Nankai-3).